The primary structure comprises 1172 residues: NACHT, LRR and PYD domains-containing protein 1b allele 3 (1172 aa).

The tract at residues 1-22 is disordered; sequence MEESPPKQKSNTKVAQHEGQQD. Residues 126–435 enclose the NACHT domain; the sequence is QLVIIEGAAG…EFFAAISCIL (310 aa). Residue 132-139 participates in ATP binding; sequence GAAGIGKS. LRR repeat units lie at residues 627–647 and 684–704; these read NLEG…QSLC and SLTE…RMLC. The ZU5 stretch occupies residues 789 to 922; that stretch reads FWGPTGPVAT…GYTVLKNPSF (134 aa). In terms of domain architecture, FIIND spans 789–1072; that stretch reads FWGPTGPVAT…LRPALPRIAQ (284 aa). The tract at residues 923-1072 is UPA; that stretch reads SPMGDVLRII…LRPALPRIAQ (150 aa). The CARD domain maps to 1082 to 1165; that stretch reads HFMDQHREQL…HLVMDLLEKS (84 aa).

It belongs to the NLRP family. In contrast to allele 1 and 2, not able to mediate autocatalytic cleavage. In terms of tissue distribution, expressed in macrophages.

The protein resides in the cytoplasm. The protein localises to the cytosol. Its activity is regulated as follows. In contrast to allele 1, does not undergo autocatalytic cleavage within the FIIND domain and its mode of activation remains unclear. In contrast to alleles 1 and 2, allele 3 is not activated by Val-boroPro (Talabostat, PT-100). Not activated by cleavage by B.anthracis lethal toxin (LT) endopeptidase. Not activated by metabolic inhibitors, such as 2-deoxy-D-glucose and sodium azide. In terms of biological role, may act as the sensor component of the Nlrp1b inflammasome, which mediates inflammasome activation in response to various pathogen-associated signals, leading to subsequent pyroptosis. Inflammasomes are supramolecular complexes that assemble in the cytosol in response to pathogens and other damage-associated signals and play critical roles in innate immunity and inflammation. May act as a recognition receptor (PRR), which recognizes specific pathogens and other damage-associated signals and forms an inflammasome complex: the inflammasome directly recruits pro-caspase-1 (proCASP1) independently of PYCARD/ASC and promotes caspase-1 (CASP1) activation, which subsequently cleaves and activates inflammatory cytokines IL1B and IL18 and gasdermin-D (GSDMD), leading to pyroptosis. In the absence of GSDMD expression, the Nlrp1b inflammasome is able to recruit and activate CASP8, leading to activation of gasdermin-E (GSDME). Contrary to Nlrp1b allele 1, allele 3 is not activated by Bacillus anthracis lethal toxin. The absence of autocatalytic cleavage within the FIIND domain, which regulates activation in other alleles, suggests that allele 3 may be non-functional. The chain is NACHT, LRR and PYD domains-containing protein 1b allele 3 from Mus musculus (Mouse).